We begin with the raw amino-acid sequence, 90 residues long: Protein RALF-like 3 (90 aa).

A signal peptide spans 1–29 (MSNLRGTNRFILVAVLVSFVFLSIMNAEA). 2 disulfides stabilise this stretch: C59/C67 and C80/C86.

The protein belongs to the plant rapid alkalinization factor (RALF) family.

It is found in the secreted. Functionally, cell signaling peptide that may regulate plant stress, growth, and development. Mediates a rapid alkalinization of extracellular space by mediating a transient increase in the cytoplasmic Ca(2+) concentration leading to a calcium-dependent signaling events through a cell surface receptor and a concomitant activation of some intracellular mitogen-activated protein kinases. The protein is Protein RALF-like 3 (RALFL3) of Arabidopsis thaliana (Mouse-ear cress).